The primary structure comprises 201 residues: Ras-related protein Rab-1B (201 aa).

Met1 carries the N-acetylmethionine modification. GTP-binding residues include Ser17, Gly18, Val19, Gly20, Lys21, Ser22, Cys23, Tyr33, Thr34, Glu35, Ser36, Ser39, and Thr40. Residue Ser22 coordinates Mg(2+). The short motif at 30-45 is the Switch 1 element; sequence DDTYTESYISTIGVDF. Residues Thr40 and Asp63 each contribute to the Mg(2+) site. The tract at residues 64 to 83 is switch 2 region; required for interaction with REP1/CHM; it reads TAGQERFRTVTSSYYRGAHG. The short motif at 65–80 is the Switch 2 element; it reads AGQERFRTVTSSYYRG. Residues Gly66, Asn121, Lys122, Asp124, Ser151, Ala152, and Lys153 each coordinate GTP. Residues 173–201 form a disordered region; the sequence is MGPGAASGGERPNLKIDSTPVKSASGGCC. 2 S-geranylgeranyl cysteine lipidation sites follow: Cys200 and Cys201. Residue Cys201 is modified to Cysteine methyl ester.

This sequence belongs to the small GTPase superfamily. Rab family. In terms of assembly, interacts with MICAL1 and MICAL2. Interacts (in GTP-bound form) with MICALCL, MICAL1 and MILCAL3. Interacts with GDI1; the interaction requires the GDP-bound state. Interacts with CHM/REP1; the interaction requires the GDP-bound form and is necessary for prenylation by GGTase II. Interacts with RabGAP TBC1D20. Interacts (in GDP-bound form) with lipid phosphatase MTMR6 (via GRAM domain); the interaction regulates MTMR6 recruitment to the endoplasmic reticulum-Golgi intermediate compartment. Interacts (in GDP-bound form) with lipid phosphatase MTMR7. The cofactor is Mg(2+). Prenylated; by GGTase II, only after interaction of the substrate with Rab escort protein 1 (REP1).

It is found in the cytoplasm. The protein resides in the membrane. It localises to the preautophagosomal structure membrane. Its subcellular location is the perinuclear region. The enzyme catalyses GTP + H2O = GDP + phosphate + H(+). Its activity is regulated as follows. Regulated by guanine nucleotide exchange factors (GEFs) which promote the exchange of bound GDP for free GTP. Regulated by GTPase activating proteins (GAPs) including TBC1D20 which increases the GTP hydrolysis activity. Inhibited by GDP dissociation inhibitors (GDIs). Its function is as follows. The small GTPases Rab are key regulators of intracellular membrane trafficking, from the formation of transport vesicles to their fusion with membranes. Rabs cycle between an inactive GDP-bound form and an active GTP-bound form that is able to recruit to membranes different set of downstream effectors directly responsible for vesicle formation, movement, tethering and fusion. Plays a role in the initial events of the autophagic vacuole development which take place at specialized regions of the endoplasmic reticulum. Regulates vesicular transport between the endoplasmic reticulum and successive Golgi compartments. Required to modulate the compacted morphology of the Golgi. Promotes the recruitment of lipid phosphatase MTMR6 to the endoplasmic reticulum-Golgi intermediate compartment. This is Ras-related protein Rab-1B (Rab1b) from Rattus norvegicus (Rat).